Reading from the N-terminus, the 605-residue chain is Acetyl-coenzyme A carboxylase carboxyl transferase subunits beta/alpha (605 aa).

The segment at 1–269 is acetyl-coenzyme A carboxylase carboxyl transferase subunit beta; it reads MFKGLFKKTK…QRAEFLLKHG (269 aa). One can recognise a CoA carboxyltransferase N-terminal domain in the interval 40-306; that stretch reads LWEKCDSCKS…SRMLDGNDCS (267 aa). The interval 40 to 570 is carboxyltransferase; it reads LWEKCDSCKS…KNNLLKTLDN (531 aa). Positions 44, 47, 63, and 66 each coordinate Zn(2+). The C4-type zinc finger occupies 44–66; sequence CDSCKSIIYAEDLKKNYHICHEC. The tract at residues 270-593 is acetyl-coenzyme A carboxylase carboxyl transferase subunit alpha; that stretch reads FVDKVINRKE…YEKFRSIGRF (324 aa). The 254-residue stretch at 317–570 folds into the CoA carboxyltransferase C-terminal domain; sequence ASAKSVEEIR…KNNLLKTLDN (254 aa).

This sequence in the N-terminal section; belongs to the AccD/PCCB family. It in the C-terminal section; belongs to the AccA family. Acetyl-CoA carboxylase is a heterotetramer composed of biotin carboxyl carrier protein (AccB), biotin carboxylase (AccC) and two subunits of ACCase subunit beta/alpha. The cofactor is Zn(2+).

It localises to the cytoplasm. It carries out the reaction N(6)-carboxybiotinyl-L-lysyl-[protein] + acetyl-CoA = N(6)-biotinyl-L-lysyl-[protein] + malonyl-CoA. Its pathway is lipid metabolism; malonyl-CoA biosynthesis; malonyl-CoA from acetyl-CoA: step 1/1. Functionally, component of the acetyl coenzyme A carboxylase (ACC) complex. Biotin carboxylase (BC) catalyzes the carboxylation of biotin on its carrier protein (BCCP) and then the CO(2) group is transferred by the transcarboxylase to acetyl-CoA to form malonyl-CoA. This chain is Acetyl-coenzyme A carboxylase carboxyl transferase subunits beta/alpha (accD), found in Natranaerobius thermophilus (strain ATCC BAA-1301 / DSM 18059 / JW/NM-WN-LF).